Reading from the N-terminus, the 352-residue chain is Ferredoxin--NADP reductase 2 (352 aa).

Positions 36, 44, 48, 88, 123, 290, and 331 each coordinate FAD.

This sequence belongs to the ferredoxin--NADP reductase type 2 family. Homodimer. It depends on FAD as a cofactor.

It carries out the reaction 2 reduced [2Fe-2S]-[ferredoxin] + NADP(+) + H(+) = 2 oxidized [2Fe-2S]-[ferredoxin] + NADPH. This Exiguobacterium sibiricum (strain DSM 17290 / CCUG 55495 / CIP 109462 / JCM 13490 / 255-15) protein is Ferredoxin--NADP reductase 2.